The chain runs to 311 residues: Meteorin-like protein (311 aa).

The span at 1–13 shows a compositional bias: low complexity; sequence MRGAARAAWGRAG. Positions 1 to 24 are disordered; sequence MRGAARAAWGRAGQPWPRPPAPGP. The signal sequence occupies residues 1-45; that stretch reads MRGAARAAWGRAGQPWPRPPAPGPPPPPLPLLLLLLAGLLGGAGA. 5 cysteine pairs are disulfide-bonded: C52-C75, C107-C143, C188-C260, C191-C284, and C201-C306.

Belongs to the meteorin family. In terms of tissue distribution, highly expressed in the skeletal muscle, in subcutaneous adipose tissue, epididymal white adipose tissue depots and heart. Also expressed in brown adipose tissues and kidney.

The protein localises to the secreted. Functionally, hormone induced following exercise or cold exposure that promotes energy expenditure. Induced either in the skeletal muscle after exercise or in adipose tissue following cold exposure and is present in the circulation. Able to stimulate energy expenditure associated with the browning of the white fat depots and improves glucose tolerance. Does not promote an increase in a thermogenic gene program via direct action on adipocytes, but acts by stimulating several immune cell subtypes to enter the adipose tissue and activate their prothermogenic actions. Stimulates an eosinophil-dependent increase in IL4 expression and promotes alternative activation of adipose tissue macrophages, which are required for the increased expression of the thermogenic and anti-inflammatory gene programs in fat. Required for some cold-induced thermogenic responses, suggesting a role in metabolic adaptations to cold temperatures. The protein is Meteorin-like protein (METRNL) of Homo sapiens (Human).